The sequence spans 170 residues: Cyclic pyranopterin monophosphate synthase (170 aa).

Residues 1 to 25 (MADPSTLTHPDPEGGVRMMDASQKS) form a disordered region. Substrate-binding positions include 78–80 (LCH) and 116–117 (ME). Residue aspartate 131 is part of the active site.

This sequence belongs to the MoaC family. As to quaternary structure, homohexamer; trimer of dimers.

It carries out the reaction (8S)-3',8-cyclo-7,8-dihydroguanosine 5'-triphosphate = cyclic pyranopterin phosphate + diphosphate. It participates in cofactor biosynthesis; molybdopterin biosynthesis. Catalyzes the conversion of (8S)-3',8-cyclo-7,8-dihydroguanosine 5'-triphosphate to cyclic pyranopterin monophosphate (cPMP). In Salinibacter ruber (strain DSM 13855 / M31), this protein is Cyclic pyranopterin monophosphate synthase.